The following is a 1021-amino-acid chain: Inversin (1021 aa).

ANK repeat units lie at residues 7–36 (QNPS…LRDS), 40–69 (FGRT…GINK), 73–102 (SQRT…DWRL), 106–137 (EEMT…EVDT), 141–170 (NKQT…NIGI), 174–206 (EGKI…TESL), 213–243 (EGRT…SVTA), 247–276 (LFRT…SGMI), 281–310 (QGAT…VRDE), 314–343 (EGRT…DIDI), 349–378 (YGGT…MVDP), 382–411 (MKHT…RVDL), 415–444 (DGHS…SPNL), 448–477 (AGRT…DPNI), 481–510 (EGRT…FPNH), and 516–546 (ERYT…SIAA). The D-box 1 signature appears at 483–491 (RTALHWSCN). Positions 548-577 (QDIAASSIQALYKGYKVRRAFRERKKLLMR) constitute an IQ 1 domain. Composition is skewed to basic and acidic residues over residues 579–598 (EQLR…REAE) and 653–669 (SRRE…REPE). Disordered regions lie at residues 579–602 (EQLR…QQLS), 632–691 (KDSV…KKCP), and 704–868 (GPDT…GTCS). The segment covering 722–731 (PAGSSRPGSA) has biased composition (low complexity). Polar residues-rich tracts occupy residues 759 to 781 (GAHS…TSKG) and 791 to 802 (TGSQPSNNTSVT). Over residues 803–866 (RQKEKRQEKE…KEKEKKKDGT (64 aa)) the composition is skewed to basic and acidic residues. A D-box 2 motif is present at residues 862–870 (KKDGTCSKN). Residues 869 to 898 (KNQAAVVIQRAWRRSCVRGRIRKVLCRSLK) form the IQ 2 domain.

Binds calmodulin via its IQ domains.

It localises to the cytoplasm. It is found in the cytoskeleton. Functionally, required for normal renal development and establishment of left-right axis. Probably acts as a molecular switch between different Wnt signaling pathways. Inhibits the canonical Wnt pathway by targeting cytoplasmic disheveled for degradation by the ubiquitin-proteasome. This suggests that it is required in renal development to oppose the repression of terminal differentiation of tubular epithelial cells by Wnt signaling. The polypeptide is Inversin (invs) (Danio rerio (Zebrafish)).